Here is a 191-residue protein sequence, read N- to C-terminus: MKELEEKIKEYGTVLPGNVLKVDAFLNHQVDPQLMLHIGQKFAKLFANEGITKIWTVESSGIAPAVMTGLEMNLPVIFARKHKSLTLNQNMYTADVYSYTKKTTNRISISKKYVDADDKILMIDDFLANGQAVEGLLEIADQAGVQVAGAGIVIEKSFQPGAGELKERGIRVESLARIQSLSDNKVEFVKD.

Xanthine-binding residues include Leu20 and Asn27. Residue Ala128 to Ala132 participates in 5-phospho-alpha-D-ribose 1-diphosphate binding. Xanthine is bound at residue Lys156.

Belongs to the purine/pyrimidine phosphoribosyltransferase family. Xpt subfamily. In terms of assembly, homodimer.

The protein resides in the cytoplasm. The catalysed reaction is XMP + diphosphate = xanthine + 5-phospho-alpha-D-ribose 1-diphosphate. It participates in purine metabolism; XMP biosynthesis via salvage pathway; XMP from xanthine: step 1/1. In terms of biological role, converts the preformed base xanthine, a product of nucleic acid breakdown, to xanthosine 5'-monophosphate (XMP), so it can be reused for RNA or DNA synthesis. This chain is Xanthine phosphoribosyltransferase, found in Limosilactobacillus reuteri (strain DSM 20016) (Lactobacillus reuteri).